The primary structure comprises 500 residues: Probable cytosol aminopeptidase (500 aa).

Residues lysine 264 and aspartate 269 each contribute to the Mn(2+) site. Lysine 276 is a catalytic residue. Positions 287, 346, and 348 each coordinate Mn(2+). Arginine 350 is a catalytic residue.

Belongs to the peptidase M17 family. Mn(2+) serves as cofactor.

Its subcellular location is the cytoplasm. The catalysed reaction is Release of an N-terminal amino acid, Xaa-|-Yaa-, in which Xaa is preferably Leu, but may be other amino acids including Pro although not Arg or Lys, and Yaa may be Pro. Amino acid amides and methyl esters are also readily hydrolyzed, but rates on arylamides are exceedingly low.. It carries out the reaction Release of an N-terminal amino acid, preferentially leucine, but not glutamic or aspartic acids.. Presumably involved in the processing and regular turnover of intracellular proteins. Catalyzes the removal of unsubstituted N-terminal amino acids from various peptides. The sequence is that of Probable cytosol aminopeptidase from Rhodopseudomonas palustris (strain BisB5).